An 865-amino-acid chain; its full sequence is Probable alpha/beta-glucosidase ARB_02101 (865 aa).

A signal peptide spans 1 to 21 (MFGRTLALAAVFATTVLSAAA). Residues N101 and N299 are each glycosylated (N-linked (GlcNAc...) asparagine). D428 (nucleophile) is an active-site residue. E431 is a catalytic residue. N515 carries N-linked (GlcNAc...) asparagine glycosylation. The Proton donor role is filled by D548. N549, N585, and N748 each carry an N-linked (GlcNAc...) asparagine glycan.

Belongs to the glycosyl hydrolase 31 family.

It localises to the secreted. It catalyses the reaction Hydrolysis of terminal, non-reducing (1-&gt;4)-linked alpha-D-glucose residues with release of alpha-D-glucose.. It carries out the reaction Hydrolysis of terminal, non-reducing beta-D-glucosyl residues with release of beta-D-glucose.. In terms of biological role, glucosidase involved in the degradation of cellulosic biomass. Has both alpha- and beta-glucosidase activity. In Arthroderma benhamiae (strain ATCC MYA-4681 / CBS 112371) (Trichophyton mentagrophytes), this protein is Probable alpha/beta-glucosidase ARB_02101.